Here is a 666-residue protein sequence, read N- to C-terminus: Probable potassium transport system protein Kup (666 aa).

12 helical membrane-spanning segments follow: residues 16–36 (GFIIALGIVYGDIGTSPLYTM), 58–78 (ISLIIWTLTLITTIKYVLVAL), 99–119 (TPWLIVPAVIGGATLLSDGAL), 141–161 (IFQNQSNVIFATLFILLLLFA), 167–187 (TGVIGKLFGPIMFIWFAFLGI), 221–241 (IFILGSIFLATTGAEALYSDL), 253–273 (WPFVKVAIILSYCGQGAWILA), 292–312 (FTMHVVILATLAAIIASQALI), 343–363 (TYIPVINWFLFAITTSIVLLF), 373–393 (YGLAITITMLMTTILLSFFLI), 402–422 (VLLMMIFFGILEGIFFLASAV), and 424–444 (FMHGGYVVVIIAVAIIFIMTI).

It belongs to the HAK/KUP transporter (TC 2.A.72) family.

Its subcellular location is the cell membrane. It carries out the reaction K(+)(in) + H(+)(in) = K(+)(out) + H(+)(out). Transport of potassium into the cell. Likely operates as a K(+):H(+) symporter. The chain is Probable potassium transport system protein Kup from Streptococcus agalactiae serotype V (strain ATCC BAA-611 / 2603 V/R).